The sequence spans 337 residues: Inositol 2-dehydrogenase (337 aa).

It belongs to the Gfo/Idh/MocA family. In terms of assembly, homotetramer.

It catalyses the reaction myo-inositol + NAD(+) = scyllo-inosose + NADH + H(+). In terms of biological role, involved in the oxidation of myo-inositol (MI) to 2-keto-myo-inositol (2KMI or 2-inosose). The protein is Inositol 2-dehydrogenase of Klebsiella pneumoniae subsp. pneumoniae (strain ATCC 700721 / MGH 78578).